The chain runs to 382 residues: tRNA (guanine(26)-N(2))-dimethyltransferase (382 aa).

Residues 4-373 (VEIIEGKARI…KNLDEIKECI (370 aa)) form the Trm1 methyltransferase domain. The S-adenosyl-L-methionine site is built by Arg-44, Arg-69, and Asp-87. Cys-246, Cys-249, Cys-263, and Cys-266 together coordinate Zn(2+).

It belongs to the class I-like SAM-binding methyltransferase superfamily. Trm1 family.

The enzyme catalyses guanosine(26) in tRNA + 2 S-adenosyl-L-methionine = N(2)-dimethylguanosine(26) in tRNA + 2 S-adenosyl-L-homocysteine + 2 H(+). Its function is as follows. Dimethylates a single guanine residue at position 26 of a number of tRNAs using S-adenosyl-L-methionine as donor of the methyl groups. The chain is tRNA (guanine(26)-N(2))-dimethyltransferase from Sulfolobus acidocaldarius (strain ATCC 33909 / DSM 639 / JCM 8929 / NBRC 15157 / NCIMB 11770).